The sequence spans 342 residues: Strictosidine synthase (342 aa).

An N-terminal signal peptide occupies residues 1-20 (KLSDSQTMALFTVFLLFLSS). The N-linked (GlcNAc...) asparagine glycan is linked to Asn89.

This sequence belongs to the strictosidine synthase family. Monomer.

It is found in the vacuole. The enzyme catalyses 3alpha(S)-strictosidine + H2O = secologanin + tryptamine. Its pathway is alkaloid biosynthesis; 3alpha(S)-strictosidine biosynthesis; 3alpha(S)-strictosidine from secologanin and tryptamine: step 1/1. Its function is as follows. Catalyzes the stereospecific condensation of tryptamine with secologanin to form strictosidine, the key intermediate of indole alkaloid biosynthesis. The sequence is that of Strictosidine synthase (STR1) from Rauvolfia mannii.